Reading from the N-terminus, the 163-residue chain is Nucleotide-binding protein GTNG_0630 (163 aa).

Belongs to the YajQ family.

In terms of biological role, nucleotide-binding protein. The protein is Nucleotide-binding protein GTNG_0630 of Geobacillus thermodenitrificans (strain NG80-2).